The sequence spans 618 residues: V-type proton ATPase catalytic subunit A (618 aa).

251–258 (GAFGCGKT) contacts ATP.

The protein belongs to the ATPase alpha/beta chains family. In terms of assembly, V-ATPase is a heteromultimeric enzyme composed of a peripheral catalytic V1 complex (main components: subunits A, B, C, D, E, and F) attached to an integral membrane V0 proton pore complex (main component: the proteolipid protein).

It catalyses the reaction ATP + H2O + 4 H(+)(in) = ADP + phosphate + 5 H(+)(out). Catalytic subunit of the peripheral V1 complex of vacuolar ATPase. V-ATPase vacuolar ATPase is responsible for acidifying a variety of intracellular compartments in eukaryotic cells. This is V-type proton ATPase catalytic subunit A (vatA) from Dictyostelium discoideum (Social amoeba).